A 530-amino-acid polypeptide reads, in one-letter code: Light-independent protochlorophyllide reductase subunit B (530 aa).

Position 36 (Asp36) interacts with [4Fe-4S] cluster. Catalysis depends on Asp290, which acts as the Proton donor. Residue 425–426 participates in substrate binding; sequence GL. The tract at residues 448-483 is disordered; it reads LGHLGGHASETKTSSKGINQSPNNHSPAGESIHWTS. A compositionally biased stretch (polar residues) spans 458–473; that stretch reads TKTSSKGINQSPNNHS.

The protein belongs to the ChlB/BchB/BchZ family. In terms of assembly, protochlorophyllide reductase is composed of three subunits; ChlL, ChlN and ChlB. Forms a heterotetramer of two ChlB and two ChlN subunits. [4Fe-4S] cluster serves as cofactor.

It catalyses the reaction chlorophyllide a + oxidized 2[4Fe-4S]-[ferredoxin] + 2 ADP + 2 phosphate = protochlorophyllide a + reduced 2[4Fe-4S]-[ferredoxin] + 2 ATP + 2 H2O. It participates in porphyrin-containing compound metabolism; chlorophyll biosynthesis (light-independent). Component of the dark-operative protochlorophyllide reductase (DPOR) that uses Mg-ATP and reduced ferredoxin to reduce ring D of protochlorophyllide (Pchlide) to form chlorophyllide a (Chlide). This reaction is light-independent. The NB-protein (ChlN-ChlB) is the catalytic component of the complex. The protein is Light-independent protochlorophyllide reductase subunit B of Prochlorococcus marinus (strain SARG / CCMP1375 / SS120).